Here is a 98-residue protein sequence, read N- to C-terminus: NADH-ubiquinone oxidoreductase chain 4L (98 aa).

The next 3 membrane-spanning stretches (helical) occupy residues 2–22 (PSIS…MLVF), 29–49 (SLLC…LFIM), and 61–81 (ILLL…LVMV).

Belongs to the complex I subunit 4L family. In terms of assembly, core subunit of respiratory chain NADH dehydrogenase (Complex I) which is composed of 45 different subunits.

It localises to the mitochondrion inner membrane. The enzyme catalyses a ubiquinone + NADH + 5 H(+)(in) = a ubiquinol + NAD(+) + 4 H(+)(out). Functionally, core subunit of the mitochondrial membrane respiratory chain NADH dehydrogenase (Complex I) which catalyzes electron transfer from NADH through the respiratory chain, using ubiquinone as an electron acceptor. Part of the enzyme membrane arm which is embedded in the lipid bilayer and involved in proton translocation. This is NADH-ubiquinone oxidoreductase chain 4L (MT-ND4L) from Lepilemur mitsinjoensis (Mitsinjo sportive lemur).